Here is a 256-residue protein sequence, read N- to C-terminus: Protein crossbronx-like (256 aa).

Positions Asn-17–Gln-179 constitute a UBC core domain.

It belongs to the ubiquitin-conjugating enzyme family. FTS subfamily.

The sequence is that of Protein crossbronx-like from Drosophila virilis (Fruit fly).